We begin with the raw amino-acid sequence, 294 residues long: Very long chain fatty acid elongase 5 (294 aa).

7 helical membrane-spanning segments follow: residues 26 to 46 (WLLL…LLIV), 64 to 84 (ILVV…YELV), 112 to 132 (VLWW…FFIL), 141 to 161 (FLHI…MNWV), 172 to 192 (FNSF…IPAI), 207 to 227 (LVQF…PCGF), and 231 to 251 (WLYF…NFYI). The segment at 261–294 (AKKDPRHNGIKSVNGHSNGASHTNAVKNRKARTD) is disordered. Residues 274-286 (NGHSNGASHTNAV) show a composition bias toward polar residues.

This sequence belongs to the ELO family. ELOVL5 subfamily. Expression is highest in intestine, followed by brain and heart, and lowest in gill. Also expressed in liver, spleen and muscle.

The protein localises to the endoplasmic reticulum membrane. Its subcellular location is the cell projection. It is found in the dendrite. It catalyses the reaction a very-long-chain acyl-CoA + malonyl-CoA + H(+) = a very-long-chain 3-oxoacyl-CoA + CO2 + CoA. The catalysed reaction is (6Z,9Z,12Z)-octadecatrienoyl-CoA + malonyl-CoA + H(+) = (8Z,11Z,14Z)-3-oxoeicosatrienoyl-CoA + CO2 + CoA. The enzyme catalyses (9Z,12Z,15Z)-octadecatrienoyl-CoA + malonyl-CoA + H(+) = (11Z,14Z,17Z)-3-oxoeicosatrienoyl-CoA + CO2 + CoA. It carries out the reaction (9Z)-hexadecenoyl-CoA + malonyl-CoA + H(+) = 3-oxo-(11Z)-octadecenoyl-CoA + CO2 + CoA. It catalyses the reaction (9Z)-octadecenoyl-CoA + malonyl-CoA + H(+) = 3-oxo-(11Z)-eicosenoyl-CoA + CO2 + CoA. The catalysed reaction is (11Z)-octadecenoyl-CoA + malonyl-CoA + H(+) = 3-oxo-(13Z)-eicosenoyl-CoA + CO2 + CoA. The enzyme catalyses (9Z,12Z)-octadecadienoyl-CoA + malonyl-CoA + H(+) = (11Z,14Z)-3-oxoicosa-11,14-dienoyl-CoA + CO2 + CoA. It carries out the reaction (6Z,9Z,12Z,15Z)-octadecatetraenoyl-CoA + malonyl-CoA + H(+) = (8Z,11Z,14Z,17Z)-3-oxoicosatetraenoyl-CoA + CO2 + CoA. It catalyses the reaction (5Z,8Z,11Z,14Z)-eicosatetraenoyl-CoA + malonyl-CoA + H(+) = (7Z,10Z,13Z,16Z)-3-oxodocosatetraenoyl-CoA + CO2 + CoA. The catalysed reaction is (5Z,8Z,11Z,14Z,17Z)-eicosapentaenoyl-CoA + malonyl-CoA + H(+) = 3-oxo-(7Z,10Z,13Z,16Z,19Z)-docosapentaenoyl-CoA + CO2 + CoA. Its pathway is lipid metabolism; polyunsaturated fatty acid biosynthesis. In terms of biological role, catalyzes the first and rate-limiting reaction of the four reactions that constitute the long-chain fatty acids elongation cycle. This endoplasmic reticulum-bound enzymatic process allows the addition of 2 carbons to the chain of long- and very long-chain fatty acids (VLCFAs) per cycle. Condensing enzyme that acts specifically toward polyunsaturated acyl-CoA with the higher activity toward C18:3(n-6) acyl-CoA. May participate in the production of monounsaturated and of polyunsaturated VLCFAs of different chain lengths that are involved in multiple biological processes as precursors of membrane lipids and lipid mediators. In conditions where the essential linoleic and alpha linoleic fatty acids are lacking it is also involved in the synthesis of Mead acid from oleic acid. This chain is Very long chain fatty acid elongase 5, found in Tachysurus fulvidraco (Yellow catfish).